The following is a 365-amino-acid chain: Peptide chain release factor 2 (365 aa).

At Gln252 the chain carries N5-methylglutamine.

The protein belongs to the prokaryotic/mitochondrial release factor family. Post-translationally, methylated by PrmC. Methylation increases the termination efficiency of RF2.

The protein resides in the cytoplasm. Peptide chain release factor 2 directs the termination of translation in response to the peptide chain termination codons UGA and UAA. The chain is Peptide chain release factor 2 (prfB) from Salmonella typhimurium (strain LT2 / SGSC1412 / ATCC 700720).